Reading from the N-terminus, the 297-residue chain is MMAKKPPKPAPRRIFQERLKITALPLYFEGFLLVKRSDHQEYKHYWTELRGTTLFFYTDKKSTIYVGKLDIIDLVCLTGQHSTEKNCAKFTLVLPKEEVHVKTENTESGEEWRGFILTVTELTVPQHVSLLPGQVIRLHEVLEREKKRRIETDQLPLMPPEKEKEPVQDYADVLNPLPECFYAVSRKEATAMLEKNPSWGNMILRPGSDSKNYSITIRQEIEMPRIKHFKVTRTGNNYTIELEKPVTLPNLFSVIDYFVKETRGNLRPFIHSADDNFGQDPNIEDRSEKFKKNPHNA.

Residues 25 to 121 (PLYFEGFLLV…WRGFILTVTE (97 aa)) form the PH domain. Tyr170 is subject to Phosphotyrosine. Residues 179–273 (ECFYAVSRKE…GNLRPFIHSA (95 aa)) form the SH2 domain. Residues 271–297 (HSADDNFGQDPNIEDRSEKFKKNPHNA) form a disordered region.

As to quaternary structure, interacts with URI1; the interaction is phosphorylation-dependent occurs in a growth-dependent manner. Interacts with KIT and CSF1R. Post-translationally, phosphorylated on tyrosine by TEC. Phosphorylated on tyrosine by KIT. Expression restricted to the bone marrow.

Its subcellular location is the nucleus. It is found in the cytoplasm. The protein localises to the mitochondrion. Functionally, may function as an adapter molecule downstream of KIT in the proliferation or differentiation of hematopoietic stem cells. The protein is Signal-transducing adaptor protein 1 (Stap1) of Mus musculus (Mouse).